Consider the following 139-residue polypeptide: D-ribose pyranase (139 aa).

Residue H20 is the Proton donor of the active site. Substrate is bound by residues D28, H106, and 128–130 (YAN).

The protein belongs to the RbsD / FucU family. RbsD subfamily. Homodecamer.

It is found in the cytoplasm. It catalyses the reaction beta-D-ribopyranose = beta-D-ribofuranose. It functions in the pathway carbohydrate metabolism; D-ribose degradation; D-ribose 5-phosphate from beta-D-ribopyranose: step 1/2. Its function is as follows. Catalyzes the interconversion of beta-pyran and beta-furan forms of D-ribose. This chain is D-ribose pyranase, found in Histophilus somni (strain 129Pt) (Haemophilus somnus).